Here is a 254-residue protein sequence, read N- to C-terminus: Leucyl/phenylalanyl-tRNA--protein transferase (254 aa).

The protein belongs to the L/F-transferase family.

The protein resides in the cytoplasm. The catalysed reaction is N-terminal L-lysyl-[protein] + L-leucyl-tRNA(Leu) = N-terminal L-leucyl-L-lysyl-[protein] + tRNA(Leu) + H(+). It carries out the reaction N-terminal L-arginyl-[protein] + L-leucyl-tRNA(Leu) = N-terminal L-leucyl-L-arginyl-[protein] + tRNA(Leu) + H(+). It catalyses the reaction L-phenylalanyl-tRNA(Phe) + an N-terminal L-alpha-aminoacyl-[protein] = an N-terminal L-phenylalanyl-L-alpha-aminoacyl-[protein] + tRNA(Phe). Functions in the N-end rule pathway of protein degradation where it conjugates Leu, Phe and, less efficiently, Met from aminoacyl-tRNAs to the N-termini of proteins containing an N-terminal arginine or lysine. This chain is Leucyl/phenylalanyl-tRNA--protein transferase, found in Burkholderia multivorans (strain ATCC 17616 / 249).